We begin with the raw amino-acid sequence, 293 residues long: Acetyl-coenzyme A carboxylase carboxyl transferase subunit beta (293 aa).

In terms of domain architecture, CoA carboxyltransferase N-terminal spans 29–293 (LWSKCPECGL…GSKSLELTNA (265 aa)). Zn(2+) contacts are provided by Cys33, Cys36, Cys52, and Cys55. The C4-type zinc finger occupies 33-55 (CPECGLVVYLKDLRLNASVCAGC).

This sequence belongs to the AccD/PCCB family. In terms of assembly, acetyl-CoA carboxylase is a heterohexamer composed of biotin carboxyl carrier protein (AccB), biotin carboxylase (AccC) and two subunits each of ACCase subunit alpha (AccA) and ACCase subunit beta (AccD). It depends on Zn(2+) as a cofactor.

It is found in the cytoplasm. The enzyme catalyses N(6)-carboxybiotinyl-L-lysyl-[protein] + acetyl-CoA = N(6)-biotinyl-L-lysyl-[protein] + malonyl-CoA. It participates in lipid metabolism; malonyl-CoA biosynthesis; malonyl-CoA from acetyl-CoA: step 1/1. Functionally, component of the acetyl coenzyme A carboxylase (ACC) complex. Biotin carboxylase (BC) catalyzes the carboxylation of biotin on its carrier protein (BCCP) and then the CO(2) group is transferred by the transcarboxylase to acetyl-CoA to form malonyl-CoA. In Synechococcus sp. (strain CC9902), this protein is Acetyl-coenzyme A carboxylase carboxyl transferase subunit beta.